Reading from the N-terminus, the 408-residue chain is CinA-like protein (408 aa).

The protein belongs to the CinA family.

This is CinA-like protein from Anaeromyxobacter dehalogenans (strain 2CP-1 / ATCC BAA-258).